The sequence spans 299 residues: tRNA-cytidine(32) 2-sulfurtransferase (299 aa).

The PP-loop motif signature appears at 56-61 (SGGKDS). Residues Cys-131, Cys-134, and Cys-222 each coordinate [4Fe-4S] cluster.

Belongs to the TtcA family. As to quaternary structure, homodimer. The cofactor is Mg(2+). It depends on [4Fe-4S] cluster as a cofactor.

It localises to the cytoplasm. It carries out the reaction cytidine(32) in tRNA + S-sulfanyl-L-cysteinyl-[cysteine desulfurase] + AH2 + ATP = 2-thiocytidine(32) in tRNA + L-cysteinyl-[cysteine desulfurase] + A + AMP + diphosphate + H(+). It functions in the pathway tRNA modification. Its function is as follows. Catalyzes the ATP-dependent 2-thiolation of cytidine in position 32 of tRNA, to form 2-thiocytidine (s(2)C32). The sulfur atoms are provided by the cysteine/cysteine desulfurase (IscS) system. The chain is tRNA-cytidine(32) 2-sulfurtransferase from Xylella fastidiosa (strain M12).